The following is an 859-amino-acid chain: Protein SEY1 (859 aa).

The Cytoplasmic portion of the chain corresponds to 1-742 (MMMNSHFAGV…KRSAIGGITQ (742 aa)). The region spanning 49 to 291 (GFNYHLISVF…FQPQYHRRIP (243 aa)) is the GB1/RHD3-type G domain. A GTP-binding site is contributed by 59-66 (GSQSTGKS). Residues 476-496 (FEHELKVYRKDLDDVSGRLRK) adopt a coiled-coil conformation. Residues 525 to 544 (LGTGRGGSGAPEHGERPPSE) form a disordered region. The chain crosses the membrane as a helical span at residues 743-763 (VPLYFYGLLVALGWNEIVAVL). At 764–766 (RNP) the chain is on the lumenal side. Residues 767 to 787 (VYFIFLILCAVGAYVTYTLNL) traverse the membrane as a helical segment. The Cytoplasmic segment spans residues 788–859 (WGPMIRMGNA…DAEVEDLDDI (72 aa)). The segment at 816–859 (SSESGRQAMAMSGNQPRGESVRMNRLNGNGKKDEDAEVEDLDDI) is disordered. Residues 850–859 (DAEVEDLDDI) show a composition bias toward acidic residues.

It belongs to the TRAFAC class dynamin-like GTPase superfamily. GB1/RHD3 GTPase family. RHD3 subfamily.

The protein localises to the endoplasmic reticulum membrane. Cooperates with the reticulon proteins and tubule-shaping DP1 family proteins to generate and maintain the structure of the tubular endoplasmic reticulum network. Has GTPase activity, which is required for its function in ER organization. In Phaeosphaeria nodorum (strain SN15 / ATCC MYA-4574 / FGSC 10173) (Glume blotch fungus), this protein is Protein SEY1.